Consider the following 1217-residue polypeptide: ATP-dependent helicase/nuclease subunit A (1217 aa).

Residues 10-475 (VIWTDAQWQS…IDLSQNFRSR (466 aa)) form the UvrD-like helicase ATP-binding domain. Position 31 to 38 (31 to 38 (AAAGSGKT)) interacts with ATP. One can recognise a UvrD-like helicase C-terminal domain in the interval 476–786 (KEVLSTTNYI…RMMTIHSSKG (311 aa)).

The protein belongs to the helicase family. AddA subfamily. In terms of assembly, heterodimer of AddA and AddB/RexB. The cofactor is Mg(2+).

The enzyme catalyses Couples ATP hydrolysis with the unwinding of duplex DNA by translocating in the 3'-5' direction.. It carries out the reaction ATP + H2O = ADP + phosphate + H(+). The heterodimer acts as both an ATP-dependent DNA helicase and an ATP-dependent, dual-direction single-stranded exonuclease. Recognizes the chi site generating a DNA molecule suitable for the initiation of homologous recombination. The AddA nuclease domain is required for chi fragment generation; this subunit has the helicase and 3' -&gt; 5' nuclease activities. The sequence is that of ATP-dependent helicase/nuclease subunit A from Staphylococcus aureus (strain MRSA252).